The sequence spans 479 residues: Signal recognition particle subunit SRP54 1 (479 aa).

A G-domain region spans residues 1–295 (MVLAELGGRI…DVKPFVSRLL (295 aa)). GTP is bound by residues 108–115 (GLQGAGKT), 190–194 (DTSGR), and 248–251 (TKMD). Residues 296-479 (GKGDWSGLVD…MMGMFGGGGK (184 aa)) form an M-domain region.

The protein belongs to the GTP-binding SRP family. SRP54 subfamily. Component of a signal recognition particle (SRP) complex that consists of a 7SL RNA molecule of 300 nucleotides and six protein subunits: SRP72, SRP68, SRP54, SRP19, SRP14 and SRP9.

The protein localises to the cytoplasm. The protein resides in the endoplasmic reticulum. The catalysed reaction is GTP + H2O = GDP + phosphate + H(+). Its function is as follows. Component of the signal recognition particle (SRP) complex, a ribonucleoprotein complex that mediates the cotranslational targeting of secretory and membrane proteins to the endoplasmic reticulum (ER). As part of the SRP complex, associates with the SRP receptor (SR) component SRPRA to target secretory proteins to the endoplasmic reticulum membrane. Binds to the signal sequence of presecretory proteins when they emerge from the ribosomes. Displays basal GTPase activity, and stimulates reciprocal GTPase activation of the SR subunit SRPRA. Forms a guanosine 5'-triphosphate (GTP)-dependent complex with the SR subunit SRPRA. SR compaction and GTPase mediated rearrangement of SR drive SRP-mediated cotranslational protein translocation into the ER. Requires the presence of SRP9/SRP14 and/or SRP19 to stably interact with RNA. The sequence is that of Signal recognition particle subunit SRP54 1 (SRP-54A) from Arabidopsis thaliana (Mouse-ear cress).